The primary structure comprises 498 residues: Swainsonine transporter swnT (498 aa).

The segment covering 1–10 has biased composition (basic and acidic residues); that stretch reads MSLRNDEQTE. A disordered region spans residues 1-21; that stretch reads MSLRNDEQTEKGAVVGKVDSQ. The next 5 membrane-spanning stretches (helical) occupy residues 42–64, 79–99, 126–146, 167–187, and 193–213; these read LSAI…VLGT, LAMA…ISAI, AMIS…AVPV, FVVF…EYFL, and ALLL…FATA. Asparagine 227 and asparagine 242 each carry an N-linked (GlcNAc...) asparagine glycan. Transmembrane regions (helical) follow at residues 272 to 292, 316 to 336, 370 to 390, 398 to 418, 436 to 456, and 469 to 489; these read LIWT…AVLV, AAAI…VWSI, PIWS…LYLA, LIAT…ILVL, GFMA…FYCF, and YVSA…FLYA.

It belongs to the amino acid-polyamine-organocation (APC) superfamily. Amino acid/choline transporter (ACT) (TC 2.A.3.4) family.

It localises to the membrane. Functionally, transmembrane transporter; part of the gene cluster that mediates the biosynthesis of swainsonine, a cytotoxic fungal alkaloid and a potential cancer therapy drug. Does not mediate the secretion of SW and the exact role of swnT in SW biosynthesis remains to be determined. The polypeptide is Swainsonine transporter swnT (Arthroderma benhamiae (strain ATCC MYA-4681 / CBS 112371) (Trichophyton mentagrophytes)).